A 41-amino-acid chain; its full sequence is Photosystem I reaction center subunit IX (41 aa).

A helical membrane pass occupies residues 7-27 (YLSTAPVVATGWFIVTAALLI).

It belongs to the PsaJ family.

Its subcellular location is the plastid. The protein resides in the chloroplast thylakoid membrane. In terms of biological role, may help in the organization of the PsaE and PsaF subunits. This chain is Photosystem I reaction center subunit IX, found in Tetradesmus obliquus (Green alga).